The sequence spans 716 residues: Fatty acid oxidation complex subunit alpha (716 aa).

An enoyl-CoA hydratase/isomerase region spans residues 1-189; that stretch reads MIYQSPTIQV…KVGAVDSVVA (189 aa). Residue aspartate 296 participates in substrate binding. A 3-hydroxyacyl-CoA dehydrogenase region spans residues 311–716; that stretch reads KEVNNAAVLG…AANNGSYYQA (406 aa). Residues methionine 324, aspartate 343, 400–402, lysine 407, and serine 429 each bind NAD(+); that span reads VVE. The active-site For 3-hydroxyacyl-CoA dehydrogenase activity is the histidine 450. Residue asparagine 453 participates in NAD(+) binding. Asparagine 500 and tyrosine 660 together coordinate substrate.

This sequence in the N-terminal section; belongs to the enoyl-CoA hydratase/isomerase family. The protein in the C-terminal section; belongs to the 3-hydroxyacyl-CoA dehydrogenase family. Heterotetramer of two alpha chains (FadB) and two beta chains (FadA).

It catalyses the reaction a (3S)-3-hydroxyacyl-CoA + NAD(+) = a 3-oxoacyl-CoA + NADH + H(+). The catalysed reaction is a (3S)-3-hydroxyacyl-CoA = a (2E)-enoyl-CoA + H2O. The enzyme catalyses a 4-saturated-(3S)-3-hydroxyacyl-CoA = a (3E)-enoyl-CoA + H2O. It carries out the reaction (3S)-3-hydroxybutanoyl-CoA = (3R)-3-hydroxybutanoyl-CoA. It catalyses the reaction a (3Z)-enoyl-CoA = a 4-saturated (2E)-enoyl-CoA. The catalysed reaction is a (3E)-enoyl-CoA = a 4-saturated (2E)-enoyl-CoA. It functions in the pathway lipid metabolism; fatty acid beta-oxidation. Functionally, involved in the aerobic and anaerobic degradation of long-chain fatty acids via beta-oxidation cycle. Catalyzes the formation of 3-oxoacyl-CoA from enoyl-CoA via L-3-hydroxyacyl-CoA. It can also use D-3-hydroxyacyl-CoA and cis-3-enoyl-CoA as substrate. The chain is Fatty acid oxidation complex subunit alpha from Shewanella baltica (strain OS185).